A 352-amino-acid chain; its full sequence is Biotin synthase (352 aa).

In terms of domain architecture, Radical SAM core spans 44–262 (NRVQVSTLLS…LAVARIMMPK (219 aa)). [4Fe-4S] cluster contacts are provided by Cys59, Cys63, and Cys66. [2Fe-2S] cluster is bound by residues Cys103, Cys134, Cys194, and Arg266.

It belongs to the radical SAM superfamily. Biotin synthase family. As to quaternary structure, homodimer. Requires [4Fe-4S] cluster as cofactor. [2Fe-2S] cluster is required as a cofactor.

It catalyses the reaction (4R,5S)-dethiobiotin + (sulfur carrier)-SH + 2 reduced [2Fe-2S]-[ferredoxin] + 2 S-adenosyl-L-methionine = (sulfur carrier)-H + biotin + 2 5'-deoxyadenosine + 2 L-methionine + 2 oxidized [2Fe-2S]-[ferredoxin]. It functions in the pathway cofactor biosynthesis; biotin biosynthesis; biotin from 7,8-diaminononanoate: step 2/2. Its function is as follows. Catalyzes the conversion of dethiobiotin (DTB) to biotin by the insertion of a sulfur atom into dethiobiotin via a radical-based mechanism. In Pseudomonas aeruginosa (strain UCBPP-PA14), this protein is Biotin synthase.